The following is a 285-amino-acid chain: Probable endonuclease 4 (285 aa).

Residues His-69, His-109, Glu-145, Asp-179, His-182, His-216, Asp-229, His-231, and Glu-261 each contribute to the Zn(2+) site.

Belongs to the AP endonuclease 2 family. Zn(2+) is required as a cofactor.

It catalyses the reaction Endonucleolytic cleavage to 5'-phosphooligonucleotide end-products.. Endonuclease IV plays a role in DNA repair. It cleaves phosphodiester bonds at apurinic or apyrimidinic (AP) sites, generating a 3'-hydroxyl group and a 5'-terminal sugar phosphate. The chain is Probable endonuclease 4 from Enterobacter sp. (strain 638).